The following is a 271-amino-acid chain: Glutamate racemase (271 aa).

Substrate-binding positions include 10–11 and 42–43; these read DS and YG. Cys73 serves as the catalytic Proton donor/acceptor. Position 74–75 (74–75) interacts with substrate; sequence NT. Cys183 acts as the Proton donor/acceptor in catalysis. A substrate-binding site is contributed by 184–185; it reads TH.

It belongs to the aspartate/glutamate racemases family.

The enzyme catalyses L-glutamate = D-glutamate. It functions in the pathway cell wall biogenesis; peptidoglycan biosynthesis. Provides the (R)-glutamate required for cell wall biosynthesis. The sequence is that of Glutamate racemase from Streptococcus thermophilus (strain CNRZ 1066).